The chain runs to 380 residues: Glucose-1-phosphate adenylyltransferase (380 aa).

Residues G164, 179 to 180 (EK), and S190 each bind alpha-D-glucose 1-phosphate.

This sequence belongs to the bacterial/plant glucose-1-phosphate adenylyltransferase family. In terms of assembly, homotetramer.

It catalyses the reaction alpha-D-glucose 1-phosphate + ATP + H(+) = ADP-alpha-D-glucose + diphosphate. It participates in glycan biosynthesis; glycogen biosynthesis. Involved in the biosynthesis of ADP-glucose, a building block required for the elongation reactions to produce glycogen. Catalyzes the reaction between ATP and alpha-D-glucose 1-phosphate (G1P) to produce pyrophosphate and ADP-Glc. In Lacticaseibacillus casei (strain BL23) (Lactobacillus casei), this protein is Glucose-1-phosphate adenylyltransferase.